A 158-amino-acid chain; its full sequence is Transcriptional repressor NrdR (158 aa).

A zinc finger spans residues 3–34; sequence CPFCSFPESRVLDSRPADEGNSIRRRRECGEC. The 91-residue stretch at 49–139 folds into the ATP-cone domain; the sequence is LVVVKKDGRR…VYRQFGDIYS (91 aa).

Belongs to the NrdR family. Requires Zn(2+) as cofactor.

Functionally, negatively regulates transcription of bacterial ribonucleotide reductase nrd genes and operons by binding to NrdR-boxes. The polypeptide is Transcriptional repressor NrdR (Desulforamulus reducens (strain ATCC BAA-1160 / DSM 100696 / MI-1) (Desulfotomaculum reducens)).